The following is a 175-amino-acid chain: uncharacterized protein (175 aa).

A disordered region spans residues 113–175 (AQLPRDSRGN…RTRSGGLERL (63 aa)).

This is an uncharacterized protein from Bos taurus (Bovine).